The sequence spans 322 residues: MSARDGNTASEWVPTGSVTVRVPGKVNLYLDVGDRRQDGYHELTTVFHAVSLLDEVTVRTADTLSLEHVGEGADSLPTDERNLAWRAAELMAEHVGRAPDVAISIEKTIPVAGGMAGGSADAAAVLVAMNSLWELGVPRRDLHALAAQLGSDVPFALHGGTALGTGRGEELATVLTRNTFHWVLAFSPGGLSTAKVFAEIDRLRAEEDRTLPPRLESPEPVLAALASGDPAQLAPLLGNDLQPAALSLDPALRRTLRAGLDAGALAGLVSGSGPTCAFLCTSAGAAVDIGTDLAGAGVCRTVRVASGPVQGARVVPAPSTAG.

K25 is a catalytic residue. ATP is bound at residue 110–120; that stretch reads PVAGGMAGGSA. D152 is a catalytic residue.

Belongs to the GHMP kinase family. IspE subfamily.

It carries out the reaction 4-CDP-2-C-methyl-D-erythritol + ATP = 4-CDP-2-C-methyl-D-erythritol 2-phosphate + ADP + H(+). Its pathway is isoprenoid biosynthesis; isopentenyl diphosphate biosynthesis via DXP pathway; isopentenyl diphosphate from 1-deoxy-D-xylulose 5-phosphate: step 3/6. Catalyzes the phosphorylation of the position 2 hydroxy group of 4-diphosphocytidyl-2C-methyl-D-erythritol. The chain is 4-diphosphocytidyl-2-C-methyl-D-erythritol kinase from Mycolicibacterium gilvum (strain PYR-GCK) (Mycobacterium gilvum (strain PYR-GCK)).